The primary structure comprises 542 residues: Chaperonin GroEL 2 (542 aa).

ATP-binding positions include 30–33 (TLGP), lysine 51, 87–91 (DGTTT), glycine 415, and aspartate 496.

This sequence belongs to the chaperonin (HSP60) family. In terms of assembly, forms a cylinder of 14 subunits composed of two heptameric rings stacked back-to-back. Interacts with the co-chaperonin GroES.

It localises to the cytoplasm. It carries out the reaction ATP + H2O + a folded polypeptide = ADP + phosphate + an unfolded polypeptide.. Together with its co-chaperonin GroES, plays an essential role in assisting protein folding. The GroEL-GroES system forms a nano-cage that allows encapsulation of the non-native substrate proteins and provides a physical environment optimized to promote and accelerate protein folding. The polypeptide is Chaperonin GroEL 2 (Chelativorans sp. (strain BNC1)).